The following is a 244-amino-acid chain: Venom nerve growth factor (244 aa).

The first 18 residues, 1 to 18 (MSMLCYTLIIAFLIGIWA), serve as a signal peptide directing secretion. Positions 19-125 (APKSEDNVSL…SLNRNIRAKR (107 aa)) are excised as a propeptide. 3 disulfide bridges follow: C139/C204, C182/C232, and C192/C234. N148 carries N-linked (GlcNAc...) asparagine glycosylation.

This sequence belongs to the NGF-beta family. As to quaternary structure, homodimer; non-covalently linked. In terms of processing, N-glycosylated. In terms of tissue distribution, expressed by the venom gland.

The protein resides in the secreted. Functionally, nerve growth factor is important for the development and maintenance of the sympathetic and sensory nervous systems. It stimulates division and differentiation of sympathetic and embryonic sensory neurons as well as basal forebrain cholinergic neurons in the brain. Its relevance in the snake venom is not clear. However, it has been shown to inhibit metalloproteinase-dependent proteolysis of platelet glycoprotein Ib alpha, suggesting a metalloproteinase inhibition to prevent metalloprotease autodigestion and/or protection against prey proteases. Binds a lipid between the two protein chains in the homodimer. The lipid-bound form promotes histamine relase from mouse mast cells, contrary to the lipid-free form. It promotes neurite outgrowth in rat PC12 pheochromocytoma cells. This chain is Venom nerve growth factor, found in Macrovipera lebetinus (Levantine viper).